Consider the following 206-residue polypeptide: Protein Mabiki (206 aa).

The interval 54-77 is disordered; sequence FSDQDADFPPLPKRRRLGSSSSSV.

Its function is as follows. Plays a role in inducing apoptosis and is involved in the repair of head patterning defects in the embryo caused by extra maternal copies of the homeotic gene bicoid. This is Protein Mabiki from Drosophila melanogaster (Fruit fly).